We begin with the raw amino-acid sequence, 102 residues long: Small ribosomal subunit protein uS10 (102 aa).

Belongs to the universal ribosomal protein uS10 family. Part of the 30S ribosomal subunit.

Its function is as follows. Involved in the binding of tRNA to the ribosomes. This is Small ribosomal subunit protein uS10 from Methanosphaerula palustris (strain ATCC BAA-1556 / DSM 19958 / E1-9c).